We begin with the raw amino-acid sequence, 364 residues long: Ribosomal RNA large subunit methyltransferase F (364 aa).

Positions 1–52 (MPKPAIKTAAKLAMSSAGKRGKPSTPKSLAKPQTTKPKTASKLKAKHGEQKR) are disordered. Over residues 25–38 (TPKSLAKPQTTKPK) the composition is skewed to polar residues.

It belongs to the methyltransferase superfamily. METTL16/RlmF family.

It is found in the cytoplasm. The enzyme catalyses adenosine(1618) in 23S rRNA + S-adenosyl-L-methionine = N(6)-methyladenosine(1618) in 23S rRNA + S-adenosyl-L-homocysteine + H(+). In terms of biological role, specifically methylates the adenine in position 1618 of 23S rRNA. The protein is Ribosomal RNA large subunit methyltransferase F of Shewanella sp. (strain ANA-3).